We begin with the raw amino-acid sequence, 178 residues long: Large ribosomal subunit protein uL16 (178 aa).

This sequence belongs to the universal ribosomal protein uL16 family.

The protein is Large ribosomal subunit protein uL16 of Saccharolobus islandicus (strain Y.N.15.51 / Yellowstone #2) (Sulfolobus islandicus).